The sequence spans 829 residues: Leucine--tRNA ligase (829 aa).

The short motif at 40 to 50 is the 'HIGH' region element; the sequence is PYPSGNIHMGH. The short motif at 581–585 is the 'KMSKS' region element; the sequence is KMSKS. Lys584 is a binding site for ATP.

Belongs to the class-I aminoacyl-tRNA synthetase family.

The protein resides in the cytoplasm. The catalysed reaction is tRNA(Leu) + L-leucine + ATP = L-leucyl-tRNA(Leu) + AMP + diphosphate. This Nitratidesulfovibrio vulgaris (strain ATCC 29579 / DSM 644 / CCUG 34227 / NCIMB 8303 / VKM B-1760 / Hildenborough) (Desulfovibrio vulgaris) protein is Leucine--tRNA ligase.